The sequence spans 570 residues: MANSKEVKSFLWTQALRRELGQYCSTVKSSIIKDAQSLLHSLDFSEVSNIQRLMRKDKRNDSDLKRLRDLNQAVFNLVELKSTQQKNVLRVGKLTSDDLLVLAADLDRLKNKVMRTERPQTLGVYMGNLTNQQLDQRKRLLDMIGISNARNAPRPGADGVVRVWDVKDSSLLNNQFGTMPSLTLACMSKQGQYELNDVVQSLTDLGLVYAAKYPNAMDLEKLTQAHPVLSIIDVSKSSINVSGYNFSLSAAVKAGACMLDGGNMLETLKVTPQNLEDILASMLKVKRAHSMFVSDTPGDRNPYENLLYKVCLSGNGWPYIACRTSLTGRAWDNTVVDLGPPIDLSQNKQMSPAKPKGAGHGMPSGLTMSQILALKDLMAAVDPNAKTWIDIEGRAEDPVEIAFYQPQTGAYIHFYREPTDAKQFKQDSKYSHGIDIGDLFNVQPGLTSAVLELLPPNMVLTCQGSEDIRRLLDSQGRKDIKLIDVLMSKSEARKFEDEVWDKFGFLCKIHTGHVVEKKKRGNKEEITPHCALLDCLMYEAASTGRFSPGSIRAVLPRDMVFRAVTEKVAL.

A binding site for the cap structure m7GTP region spans residues 54-241; sequence MRKDKRNDSD…IDVSKSSINV (188 aa). Positions 342–361 are disordered; the sequence is IDLSQNKQMSPAKPKGAGHG. Residues Asp-390 and Glu-392 each contribute to the Mn(2+) site. Zn(2+) contacts are provided by Glu-400, Cys-507, His-510, and Cys-530. Position 534 (Asp-534) interacts with Mn(2+).

Belongs to the arenaviridae nucleocapsid protein family. Homomultimerizes to form the nucleocapsid. Binds to viral genomic RNA. Interacts with glycoprotein G2. Interacts with protein Z; this interaction probably directs the encapsidated genome to budding sites. Interacts with protein L; this interaction does not interfere with Z-L interaction. Interacts with host IKBKE (via Protein kinase domain); the interaction inhibits IKBKE kinase activity.

The protein localises to the virion. Its subcellular location is the host cytoplasm. Its function is as follows. Encapsidates the genome, protecting it from nucleases. The encapsidated genomic RNA is termed the nucleocapsid (NC). Serves as template for viral transcription and replication. The increased presence of protein N in host cell does not seem to trigger the switch from transcription to replication as observed in other negative strain RNA viruses. Through the interaction with host IKBKE, strongly inhibits the phosphorylation and nuclear translocation of host IRF3, a protein involved in interferon activation pathway, leading to the inhibition of interferon-beta and IRF3-dependent promoters activation. Also encodes a functional 3'-5' exoribonuclease that degrades preferentially dsRNA substrates and thereby participates in the suppression of interferon induction. The chain is Nucleoprotein from Praomys (African soft-furred rats).